Here is an 860-residue protein sequence, read N- to C-terminus: Leucine--tRNA ligase (860 aa).

The 'HIGH' region motif lies at 42 to 52; it reads PYPSGRLHMGH. The short motif at 619 to 623 is the 'KMSKS' region element; it reads KMSKS. Lys622 serves as a coordination point for ATP.

The protein belongs to the class-I aminoacyl-tRNA synthetase family.

The protein resides in the cytoplasm. It catalyses the reaction tRNA(Leu) + L-leucine + ATP = L-leucyl-tRNA(Leu) + AMP + diphosphate. This chain is Leucine--tRNA ligase, found in Salmonella enteritidis PT4 (strain P125109).